The primary structure comprises 1148 residues: Zinc finger CCCH domain-containing protein 18 (1148 aa).

Residues 1-13 (MDTPESPTQSPQS) show a composition bias toward low complexity. 3 disordered regions span residues 1 to 315 (MDTP…PMDR), 380 to 417 (DPFS…LPPP), and 521 to 1127 (YTET…REEL). 2 stretches are compositionally biased toward basic and acidic residues: residues 53–73 (VPEH…AGRE) and 82–96 (EDYK…DIHQ). Acidic residues-rich tracts occupy residues 144-156 (ERGD…EEDE) and 167-176 (ELEEEEDEEE). Residues 190–202 (DLKDESSVSRDLD) are compositionally biased toward basic and acidic residues. Acidic residues-rich tracts occupy residues 203–214 (EHELDYDEEVPE) and 233–245 (EDGE…DEEE). The span at 261–289 (DNRDTPLRKSEDSREGGRRDSFRDKKKEE) shows a compositional bias: basic and acidic residues. The span at 290–306 (DDGEIDEGEIDDDDLEE) shows a compositional bias: acidic residues. Residues 388–397 (PPGGAAGGGP) show a composition bias toward gly residues. Residues 530-615 (PDRERERDPR…EKKDEKEKTL (86 aa)) are compositionally biased toward basic and acidic residues. Residues 543–584 (RERERERERDHRERERRQREREREREREREKDSRRRKDEWDR) adopt a coiled-coil conformation. The segment covering 622–631 (NMPPRGPMEP) has biased composition (pro residues). A compositionally biased stretch (basic and acidic residues) spans 632–646 (PTKKDMLSVTKRPDE). S666 bears the Phosphoserine mark. Positions 677-740 (SGSSVSLSNS…SRSGSFSSSP (64 aa)) are enriched in low complexity. 2 stretches are compositionally biased toward pro residues: residues 783–800 (KVMP…PPKP) and 807–817 (PPNPRPPGRPP). Over residues 818-833 (GPREPREPPNMREGRK) the composition is skewed to basic and acidic residues. Composition is skewed to low complexity over residues 847-875 (VSGS…ASRS), 882-903 (SLSV…SVRS), and 914-925 (ASPVSSASSRSP). 2 stretches are compositionally biased toward basic and acidic residues: residues 933-964 (DRGP…KRVD) and 1012-1029 (QTDR…KERP). Residue S1056 is modified to Phosphoserine. Low complexity-rich tracts occupy residues 1083–1098 (PAKS…SAAK) and 1107–1119 (GSAS…KPSS). Positions 1118–1146 (SSTLSRREELLKQLKAVEDAIARKRAKIP) form a coiled coil.

It is found in the nucleus. The polypeptide is Zinc finger CCCH domain-containing protein 18 (zc3h18) (Danio rerio (Zebrafish)).